We begin with the raw amino-acid sequence, 493 residues long: Vacuolar-processing enzyme (493 aa).

Residues 1-34 (MAVHRSLLNKPTWCRVAFWWWMLVMVMRIQGTNG) form the signal peptide. A propeptide spanning residues 35–53 (KEQDSVIKLPTQEVDAESD) is cleaved from the precursor. Residue histidine 176 is part of the active site. Cysteine 218 (nucleophile) is an active-site residue. A disulfide bond links cysteine 251 and cysteine 265. N-linked (GlcNAc...) asparagine glycosylation is present at asparagine 318. Disulfide bonds link cysteine 429/cysteine 459 and cysteine 441/cysteine 476.

It belongs to the peptidase C13 family.

Functionally, asparagine-specific endopeptidase involved in the processing of vacuolar seed protein precursors into the mature forms. The polypeptide is Vacuolar-processing enzyme (Phaseolus vulgaris (Kidney bean)).